Here is a 702-residue protein sequence, read N- to C-terminus: Putative endo-beta-N-acetylglucosaminidase (702 aa).

The first 23 residues, 1-23, serve as a signal peptide directing secretion; sequence MKKVRFIFLALLFFLASPEGAMA. Cell wall-binding repeat units follow at residues 42 to 63, 65 to 84, 86 to 105, 124 to 145, 147 to 166, 185 to 206, 208 to 227, 229 to 248, 250 to 271, 273 to 292, 294 to 315, 317 to 336, 338 to 359, 361 to 380, and 382 to 403; these read ANEW…DANY, ENEW…GGYM, KSEW…DGKM, IEDW…DGQH, EKEW…GGYL, QQGW…NGNY, DKEW…GGYM, ANEW…DGKI, EKEW…GGYM, and ANEW…DGKM.

Belongs to the glycosyl hydrolase 73 family.

Its subcellular location is the secreted. The enzyme catalyses an N(4)-(oligosaccharide-(1-&gt;3)-[oligosaccharide-(1-&gt;6)]-beta-D-Man-(1-&gt;4)-beta-D-GlcNAc-(1-&gt;4)-alpha-D-GlcNAc)-L-asparaginyl-[protein] + H2O = an oligosaccharide-(1-&gt;3)-[oligosaccharide-(1-&gt;6)]-beta-D-Man-(1-&gt;4)-D-GlcNAc + N(4)-(N-acetyl-beta-D-glucosaminyl)-L-asparaginyl-[protein]. Plays an important role in cell wall degradation and cell separation. In Streptococcus pneumoniae (strain ATCC BAA-255 / R6), this protein is Putative endo-beta-N-acetylglucosaminidase (lytB).